Reading from the N-terminus, the 142-residue chain is Large ribosomal subunit protein uL11 (142 aa).

This sequence belongs to the universal ribosomal protein uL11 family. Part of the ribosomal stalk of the 50S ribosomal subunit. Interacts with L10 and the large rRNA to form the base of the stalk. L10 forms an elongated spine to which L12 dimers bind in a sequential fashion forming a multimeric L10(L12)X complex. Post-translationally, one or more lysine residues are methylated.

Forms part of the ribosomal stalk which helps the ribosome interact with GTP-bound translation factors. In Acinetobacter baumannii (strain AB307-0294), this protein is Large ribosomal subunit protein uL11.